Reading from the N-terminus, the 166-residue chain is Small ribosomal subunit protein uS9 (166 aa).

A compositionally biased stretch (acidic residues) spans 1–16; it reads MSDTTNEVEETYEVDE. The segment at 1-45 is disordered; sequence MSDTTNEVEETYEVDEQGIAYSSESAPSADAPLRPATIAPANATG.

The protein belongs to the universal ribosomal protein uS9 family.

The sequence is that of Small ribosomal subunit protein uS9 from Nocardioides sp. (strain ATCC BAA-499 / JS614).